The chain runs to 607 residues: Kelch repeat and BTB domain-containing protein 3 (607 aa).

The 68-residue stretch at Tyr-48 to Asp-115 folds into the BTB domain. In terms of domain architecture, BACK spans Cys-150 to Tyr-250. 5 Kelch repeats span residues Lys-291–Gly-337, Lys-339–Thr-390, Arg-400–Asn-450, Ile-452–Pro-502, and Lys-548–Phe-595.

The polypeptide is Kelch repeat and BTB domain-containing protein 3 (Mus musculus (Mouse)).